The following is a 301-amino-acid chain: Probable alpha-L-glutamate ligase (301 aa).

In terms of domain architecture, ATP-grasp spans 104 to 287 (LQLLSRRGIG…VAGMIIEHLE (184 aa)). ATP contacts are provided by residues Lys-141, 178–179 (EY), Asp-187, and 211–213 (RSN). Mg(2+) contacts are provided by Asp-248, Glu-260, and Asn-262. Mn(2+) is bound by residues Asp-248, Glu-260, and Asn-262.

Belongs to the RimK family. The cofactor is Mg(2+). Mn(2+) is required as a cofactor.

The protein is Probable alpha-L-glutamate ligase of Pseudomonas entomophila (strain L48).